Consider the following 117-residue polypeptide: Large ribosomal subunit protein bL20 (117 aa).

This sequence belongs to the bacterial ribosomal protein bL20 family.

Its function is as follows. Binds directly to 23S ribosomal RNA and is necessary for the in vitro assembly process of the 50S ribosomal subunit. It is not involved in the protein synthesizing functions of that subunit. In Actinobacillus succinogenes (strain ATCC 55618 / DSM 22257 / CCUG 43843 / 130Z), this protein is Large ribosomal subunit protein bL20.